Consider the following 315-residue polypeptide: MRITARAWGKINLHLGVGPAREDGYHELVTVFQTIDLAETITLTTLEDELVEEGSVVRQLTVTGPRGVPTTPDNLAWRAVDALVGRRREHDRTPLPAVELHIDKGIPVAGGMAGGSADAAAALRAVDAWIGPFGEETLLEVAAELGSDVPFCLLGGTKLGTGRGEQLVDMLSRGTYHWALVVSPKGLSTPEVFAKFDEMSLPSSMDVTPMSQALLDGSAGALAEVLENDLAPAALSLRPDLRKTQLAGLRAGALATMVSGSGPTIALLCDDAQSARDVADALMDEGVGLSVHPATSPVPGPAKNRGAHIVSIESE.

Lysine 10 is a catalytic residue. 107–117 is a binding site for ATP; the sequence is PVAGGMAGGSA. Aspartate 148 is an active-site residue. A disordered region spans residues 292–315; the sequence is HPATSPVPGPAKNRGAHIVSIESE.

It belongs to the GHMP kinase family. IspE subfamily.

It catalyses the reaction 4-CDP-2-C-methyl-D-erythritol + ATP = 4-CDP-2-C-methyl-D-erythritol 2-phosphate + ADP + H(+). It functions in the pathway isoprenoid biosynthesis; isopentenyl diphosphate biosynthesis via DXP pathway; isopentenyl diphosphate from 1-deoxy-D-xylulose 5-phosphate: step 3/6. Its function is as follows. Catalyzes the phosphorylation of the position 2 hydroxy group of 4-diphosphocytidyl-2C-methyl-D-erythritol. This is 4-diphosphocytidyl-2-C-methyl-D-erythritol kinase from Corynebacterium efficiens (strain DSM 44549 / YS-314 / AJ 12310 / JCM 11189 / NBRC 100395).